The sequence spans 868 residues: Leucine--tRNA ligase (868 aa).

The short motif at 42-52 (PYPSGKLHMGH) is the 'HIGH' region element. Positions 627 to 631 (KMSKS) match the 'KMSKS' region motif. Lysine 630 contributes to the ATP binding site.

Belongs to the class-I aminoacyl-tRNA synthetase family.

The protein localises to the cytoplasm. It catalyses the reaction tRNA(Leu) + L-leucine + ATP = L-leucyl-tRNA(Leu) + AMP + diphosphate. The protein is Leucine--tRNA ligase of Pseudomonas savastanoi pv. phaseolicola (strain 1448A / Race 6) (Pseudomonas syringae pv. phaseolicola (strain 1448A / Race 6)).